The chain runs to 348 residues: Anthranilate phosphoribosyltransferase (348 aa).

Residues G81, 84–85 (GD), T89, 91–94 (NIST), 109–117 (KHGNRAMSS), and S121 contribute to the 5-phospho-alpha-D-ribose 1-diphosphate site. Position 81 (G81) interacts with anthranilate. Position 93 (S93) interacts with Mg(2+). N112 is a binding site for anthranilate. R167 serves as a coordination point for anthranilate. Residues D226 and E227 each contribute to the Mg(2+) site.

It belongs to the anthranilate phosphoribosyltransferase family. As to quaternary structure, homodimer. Mg(2+) is required as a cofactor.

The enzyme catalyses N-(5-phospho-beta-D-ribosyl)anthranilate + diphosphate = 5-phospho-alpha-D-ribose 1-diphosphate + anthranilate. Its pathway is amino-acid biosynthesis; L-tryptophan biosynthesis; L-tryptophan from chorismate: step 2/5. Catalyzes the transfer of the phosphoribosyl group of 5-phosphorylribose-1-pyrophosphate (PRPP) to anthranilate to yield N-(5'-phosphoribosyl)-anthranilate (PRA). This chain is Anthranilate phosphoribosyltransferase, found in Thermomicrobium roseum (strain ATCC 27502 / DSM 5159 / P-2).